Reading from the N-terminus, the 426-residue chain is D-tagatose-1,6-bisphosphate aldolase subunit KbaZ (426 aa).

It belongs to the GatZ/KbaZ family. KbaZ subfamily. Forms a complex with KbaY.

It functions in the pathway carbohydrate metabolism; D-tagatose 6-phosphate degradation; D-glyceraldehyde 3-phosphate and glycerone phosphate from D-tagatose 6-phosphate: step 2/2. Component of the tagatose-1,6-bisphosphate aldolase KbaYZ that is required for full activity and stability of the Y subunit. Could have a chaperone-like function for the proper and stable folding of KbaY. When expressed alone, KbaZ does not show any aldolase activity. This is D-tagatose-1,6-bisphosphate aldolase subunit KbaZ from Escherichia coli O157:H7.